The chain runs to 485 residues: Glutamyl-tRNA(Gln) amidotransferase subunit A (485 aa).

Residues Lys-74 and Ser-149 each act as charge relay system in the active site. Catalysis depends on Ser-173, which acts as the Acyl-ester intermediate.

The protein belongs to the amidase family. GatA subfamily. In terms of assembly, heterotrimer of A, B and C subunits.

It carries out the reaction L-glutamyl-tRNA(Gln) + L-glutamine + ATP + H2O = L-glutaminyl-tRNA(Gln) + L-glutamate + ADP + phosphate + H(+). Its function is as follows. Allows the formation of correctly charged Gln-tRNA(Gln) through the transamidation of misacylated Glu-tRNA(Gln) in organisms which lack glutaminyl-tRNA synthetase. The reaction takes place in the presence of glutamine and ATP through an activated gamma-phospho-Glu-tRNA(Gln). This Herminiimonas arsenicoxydans protein is Glutamyl-tRNA(Gln) amidotransferase subunit A.